The following is a 185-amino-acid chain: Ribosome-recycling factor (185 aa).

This sequence belongs to the RRF family.

Its subcellular location is the cytoplasm. In terms of biological role, responsible for the release of ribosomes from messenger RNA at the termination of protein biosynthesis. May increase the efficiency of translation by recycling ribosomes from one round of translation to another. The chain is Ribosome-recycling factor from Halothermothrix orenii (strain H 168 / OCM 544 / DSM 9562).